Reading from the N-terminus, the 338-residue chain is GTPase Obg (338 aa).

The Obg domain maps to 1–159; that stretch reads MKFVDSASVF…FTLDLELKLM (159 aa). Residues 123–145 are disordered; it reads GGRGNQHFATSTHQAPRHAEPGQ. Residues 160–323 form the OBG-type G domain; sequence ADVGLVGFPN…LKDALWRIIV (164 aa). GTP contacts are provided by residues 166-173, 191-195, 213-216, 280-283, and 304-306; these read GFPNAGKS, FTTLV, DIPG, TKMD, and SAV. Residues Ser173 and Thr193 each contribute to the Mg(2+) site.

This sequence belongs to the TRAFAC class OBG-HflX-like GTPase superfamily. OBG GTPase family. Monomer. Requires Mg(2+) as cofactor.

It is found in the cytoplasm. Its function is as follows. An essential GTPase which binds GTP, GDP and possibly (p)ppGpp with moderate affinity, with high nucleotide exchange rates and a fairly low GTP hydrolysis rate. Plays a role in control of the cell cycle, stress response, ribosome biogenesis and in those bacteria that undergo differentiation, in morphogenesis control. The sequence is that of GTPase Obg from Chlorobium chlorochromatii (strain CaD3).